The sequence spans 330 residues: Aspartate--ammonia ligase (330 aa).

It belongs to the class-II aminoacyl-tRNA synthetase family. AsnA subfamily.

It is found in the cytoplasm. It carries out the reaction L-aspartate + NH4(+) + ATP = L-asparagine + AMP + diphosphate + H(+). It functions in the pathway amino-acid biosynthesis; L-asparagine biosynthesis; L-asparagine from L-aspartate (ammonia route): step 1/1. The polypeptide is Aspartate--ammonia ligase (Streptococcus pyogenes serotype M1).